The chain runs to 270 residues: Glucosamine-6-phosphate deaminase (270 aa).

Residue Asp-72 is the Proton acceptor; for enolization step of the active site. Asp-141 functions as the For ring-opening step in the catalytic mechanism. Catalysis depends on His-143, which acts as the Proton acceptor; for ring-opening step. Glu-148 serves as the catalytic For ring-opening step.

This sequence belongs to the glucosamine/galactosamine-6-phosphate isomerase family. NagB subfamily.

The catalysed reaction is alpha-D-glucosamine 6-phosphate + H2O = beta-D-fructose 6-phosphate + NH4(+). Its pathway is amino-sugar metabolism; N-acetylneuraminate degradation; D-fructose 6-phosphate from N-acetylneuraminate: step 5/5. With respect to regulation, allosterically activated by N-acetylglucosamine 6-phosphate (GlcNAc6P). Its function is as follows. Catalyzes the reversible isomerization-deamination of glucosamine 6-phosphate (GlcN6P) to form fructose 6-phosphate (Fru6P) and ammonium ion. The sequence is that of Glucosamine-6-phosphate deaminase from Bacteroides fragilis (strain ATCC 25285 / DSM 2151 / CCUG 4856 / JCM 11019 / LMG 10263 / NCTC 9343 / Onslow / VPI 2553 / EN-2).